Here is a 319-residue protein sequence, read N- to C-terminus: V-set and transmembrane domain-containing protein 4 (319 aa).

Residues 1–23 form the signal peptide; that stretch reads MRLRLLALAAAVLLGPAPEVCGA. An Ig-like domain is found at 24–154; it reads LNVTVSPGPV…SSATEMRVIS (131 aa). N-linked (GlcNAc...) asparagine glycosylation is found at N25 and N41. A disulfide bond links C46 and C126. N143 carries an N-linked (GlcNAc...) asparagine glycan. The helical transmembrane segment at 180–200 threads the bilayer; that stretch reads AVLVCCVGILSVLLFTLVIAW.

In terms of processing, proteolytically cleaved to generate a bioactive peptide. As to expression, peptide Lv is widely expressed in various tissues and the central nervous system, including the retinal photoreceptor layer, hippocampus, olfactory bulb, and cerebellum.

It is found in the cell membrane. The protein localises to the secreted. Functionally, peptide Lv enhances L-type voltage-gated calcium channel (L-VGCC) currents in retinal photoreceptors. This chain is V-set and transmembrane domain-containing protein 4 (Vstm4), found in Mus musculus (Mouse).